A 175-amino-acid chain; its full sequence is Transcriptional activatory protein BadR (175 aa).

The HTH marR-type domain occupies 20–156; the sequence is ANRLFFRLYQ…TLHYLLKILD (137 aa).

In terms of biological role, transcriptional activator of genes for the anaerobic degradation of benzoate. This Rhodopseudomonas palustris (strain ATCC BAA-98 / CGA009) protein is Transcriptional activatory protein BadR (badR).